The chain runs to 901 residues: Protein translocase subunit SecA (901 aa).

ATP is bound by residues glutamine 85, 103–107, and aspartate 510; that span reads GEGKT. The segment covering 836–845 has biased composition (basic and acidic residues); the sequence is EEAERARQEM. A disordered region spans residues 836 to 901; that stretch reads EEAERARQEM…HCHGSRVARQ (66 aa). Positions 849 to 866 are enriched in polar residues; sequence INQNNLPVDENSQTTQNS. Zn(2+)-binding residues include cysteine 882, cysteine 884, cysteine 893, and histidine 894. Positions 888 to 901 are enriched in basic residues; the sequence is KKYKHCHGSRVARQ.

Belongs to the SecA family. In terms of assembly, monomer and homodimer. Part of the essential Sec protein translocation apparatus which comprises SecA, SecYEG and auxiliary proteins SecDF-YajC and YidC. It depends on Zn(2+) as a cofactor.

It is found in the cell inner membrane. It localises to the cytoplasm. It carries out the reaction ATP + H2O + cellular proteinSide 1 = ADP + phosphate + cellular proteinSide 2.. Its function is as follows. Part of the Sec protein translocase complex. Interacts with the SecYEG preprotein conducting channel. Has a central role in coupling the hydrolysis of ATP to the transfer of proteins into and across the cell membrane, serving both as a receptor for the preprotein-SecB complex and as an ATP-driven molecular motor driving the stepwise translocation of polypeptide chains across the membrane. The polypeptide is Protein translocase subunit SecA (Haemophilus influenzae (strain PittEE)).